A 96-amino-acid polypeptide reads, in one-letter code: Aspartyl/glutamyl-tRNA(Asn/Gln) amidotransferase subunit C (96 aa).

This sequence belongs to the GatC family. In terms of assembly, heterotrimer of A, B and C subunits.

The enzyme catalyses L-glutamyl-tRNA(Gln) + L-glutamine + ATP + H2O = L-glutaminyl-tRNA(Gln) + L-glutamate + ADP + phosphate + H(+). It catalyses the reaction L-aspartyl-tRNA(Asn) + L-glutamine + ATP + H2O = L-asparaginyl-tRNA(Asn) + L-glutamate + ADP + phosphate + 2 H(+). Allows the formation of correctly charged Asn-tRNA(Asn) or Gln-tRNA(Gln) through the transamidation of misacylated Asp-tRNA(Asn) or Glu-tRNA(Gln) in organisms which lack either or both of asparaginyl-tRNA or glutaminyl-tRNA synthetases. The reaction takes place in the presence of glutamine and ATP through an activated phospho-Asp-tRNA(Asn) or phospho-Glu-tRNA(Gln). The protein is Aspartyl/glutamyl-tRNA(Asn/Gln) amidotransferase subunit C of Bacillus velezensis (strain DSM 23117 / BGSC 10A6 / LMG 26770 / FZB42) (Bacillus amyloliquefaciens subsp. plantarum).